A 238-amino-acid chain; its full sequence is 1-(5-phosphoribosyl)-5-[(5-phosphoribosylamino)methylideneamino] imidazole-4-carboxamide isomerase (238 aa).

D8 acts as the Proton acceptor in catalysis. Residue D129 is the Proton donor of the active site.

The protein belongs to the HisA/HisF family.

Its subcellular location is the cytoplasm. It catalyses the reaction 1-(5-phospho-beta-D-ribosyl)-5-[(5-phospho-beta-D-ribosylamino)methylideneamino]imidazole-4-carboxamide = 5-[(5-phospho-1-deoxy-D-ribulos-1-ylimino)methylamino]-1-(5-phospho-beta-D-ribosyl)imidazole-4-carboxamide. It functions in the pathway amino-acid biosynthesis; L-histidine biosynthesis; L-histidine from 5-phospho-alpha-D-ribose 1-diphosphate: step 4/9. This is 1-(5-phosphoribosyl)-5-[(5-phosphoribosylamino)methylideneamino] imidazole-4-carboxamide isomerase from Lacticaseibacillus paracasei (strain ATCC 334 / BCRC 17002 / CCUG 31169 / CIP 107868 / KCTC 3260 / NRRL B-441) (Lactobacillus paracasei).